A 312-amino-acid polypeptide reads, in one-letter code: MVDYYEVLGVQRYASPEDIKRAYRKVALKWHPDKNPENKEEAERKFKEVAEAYEVLSNVEKRDIYDKYGKEGLDGRGASHLDDEREYRFTFRKADDVFKEIFGERDPFSFHLFEDSLEGLLNSSRSPSGSRGRGAGSHVSRAYDHPALSGLSSYDTGYSSYVSLGHEGLTSFSSLALDDSGMGNYIPITPSGKVINGRNINTKKAFENRQEREAEDDSELISFLVNSVANEEHFTDKCNWRRQSFNNYSPNSYSSSNTTQYTLVDNNEQGTSWVTNKKEPSIFSAGFKEGGRRKKKKHKEGQKKKKSNKRNH.

Residues 3 to 69 (DYYEVLGVQR…EKRDIYDKYG (67 aa)) form the J domain. Positions 272 to 312 (SWVTNKKEPSIFSAGFKEGGRRKKKKHKEGQKKKKSNKRNH) are disordered. The segment covering 291–312 (GRRKKKKHKEGQKKKKSNKRNH) has biased composition (basic residues).

In terms of biological role, probably acts as a co-chaperone. The protein is DnaJ homolog subfamily B member 7 (Dnajb7) of Mus musculus (Mouse).